A 487-amino-acid polypeptide reads, in one-letter code: Aspartyl/glutamyl-tRNA(Asn/Gln) amidotransferase subunit B (487 aa).

The protein belongs to the GatB/GatE family. GatB subfamily. As to quaternary structure, heterotrimer of A, B and C subunits.

The catalysed reaction is L-glutamyl-tRNA(Gln) + L-glutamine + ATP + H2O = L-glutaminyl-tRNA(Gln) + L-glutamate + ADP + phosphate + H(+). The enzyme catalyses L-aspartyl-tRNA(Asn) + L-glutamine + ATP + H2O = L-asparaginyl-tRNA(Asn) + L-glutamate + ADP + phosphate + 2 H(+). Allows the formation of correctly charged Asn-tRNA(Asn) or Gln-tRNA(Gln) through the transamidation of misacylated Asp-tRNA(Asn) or Glu-tRNA(Gln) in organisms which lack either or both of asparaginyl-tRNA or glutaminyl-tRNA synthetases. The reaction takes place in the presence of glutamine and ATP through an activated phospho-Asp-tRNA(Asn) or phospho-Glu-tRNA(Gln). The protein is Aspartyl/glutamyl-tRNA(Asn/Gln) amidotransferase subunit B of Leptospira biflexa serovar Patoc (strain Patoc 1 / Ames).